A 264-amino-acid chain; its full sequence is NAD-capped RNA hydrolase NudC (264 aa).

C99 and C102 together coordinate Zn(2+). A substrate-binding site is contributed by E112. Residues C117 and C120 each coordinate Zn(2+). Residue Y125 participates in substrate binding. In terms of domain architecture, Nudix hydrolase spans 126-253 (PVICPSIIVA…TIARKLIHVT (128 aa)). Positions 162, 178, and 182 each coordinate a divalent metal cation. Positions 163 to 184 (GFVEVGETFEQAVQREVFEETG) match the Nudix box motif. 196–203 (QPWAFPNS) serves as a coordination point for substrate. An a divalent metal cation-binding site is contributed by E223. A246 contacts substrate.

Belongs to the Nudix hydrolase family. NudC subfamily. Homodimer. It depends on Mg(2+) as a cofactor. The cofactor is Mn(2+). Zn(2+) serves as cofactor.

The enzyme catalyses a 5'-end NAD(+)-phospho-ribonucleoside in mRNA + H2O = a 5'-end phospho-adenosine-phospho-ribonucleoside in mRNA + beta-nicotinamide D-ribonucleotide + 2 H(+). The catalysed reaction is NAD(+) + H2O = beta-nicotinamide D-ribonucleotide + AMP + 2 H(+). It catalyses the reaction NADH + H2O = reduced beta-nicotinamide D-ribonucleotide + AMP + 2 H(+). Functionally, mRNA decapping enzyme that specifically removes the nicotinamide adenine dinucleotide (NAD) cap from a subset of mRNAs by hydrolyzing the diphosphate linkage to produce nicotinamide mononucleotide (NMN) and 5' monophosphate mRNA. The NAD-cap is present at the 5'-end of some mRNAs and stabilizes RNA against 5'-processing. Has preference for mRNAs with a 5'-end purine. Catalyzes the hydrolysis of a broad range of dinucleotide pyrophosphates. This Haemophilus influenzae (strain ATCC 51907 / DSM 11121 / KW20 / Rd) protein is NAD-capped RNA hydrolase NudC.